Consider the following 466-residue polypeptide: Ribulose bisphosphate carboxylase large chain (466 aa).

At K4 the chain carries N6,N6,N6-trimethyllysine. Positions 113 and 163 each coordinate substrate. Catalysis depends on K165, which acts as the Proton acceptor. K167 is a substrate binding site. Residues K191, D193, and E194 each coordinate Mg(2+). An N6-carboxylysine modification is found at K191. H284 (proton acceptor) is an active-site residue. The substrate site is built by R285, H317, and S369.

Belongs to the RuBisCO large chain family. Type I subfamily. In terms of assembly, heterohexadecamer of 8 large chains and 8 small chains; disulfide-linked. The disulfide link is formed within the large subunit homodimers. Requires Mg(2+) as cofactor. In terms of processing, the disulfide bond which can form in the large chain dimeric partners within the hexadecamer appears to be associated with oxidative stress and protein turnover.

The protein resides in the plastid. It localises to the chloroplast. The catalysed reaction is 2 (2R)-3-phosphoglycerate + 2 H(+) = D-ribulose 1,5-bisphosphate + CO2 + H2O. The enzyme catalyses D-ribulose 1,5-bisphosphate + O2 = 2-phosphoglycolate + (2R)-3-phosphoglycerate + 2 H(+). Its function is as follows. RuBisCO catalyzes two reactions: the carboxylation of D-ribulose 1,5-bisphosphate, the primary event in carbon dioxide fixation, as well as the oxidative fragmentation of the pentose substrate in the photorespiration process. Both reactions occur simultaneously and in competition at the same active site. The polypeptide is Ribulose bisphosphate carboxylase large chain (Pinguicula caerulea (Blueflower butterwort)).